The following is an 84-amino-acid chain: Alpha-mammal toxin Ts2 (84 aa).

An N-terminal signal peptide occupies residues 1 to 20 (MKGFLLFISILMMIGTIVVG). The LCN-type CS-alpha/beta domain occupies 21 to 83 (KEGYAMDHEG…VWDYATNKCG (63 aa)). 4 disulfides stabilise this stretch: C31/C82, C35/C58, C43/C63, and C47/C65. C82 carries the post-translational modification Cysteine amide.

It belongs to the long (4 C-C) scorpion toxin superfamily. Sodium channel inhibitor family. Beta subfamily. As to expression, expressed by the venom gland.

Its subcellular location is the secreted. In terms of biological role, alpha toxins bind voltage-independently at site-3 of sodium channels (Nav) and inhibit the inactivation of the activated channels, thereby blocking neuronal transmission. This toxin acts on Nav1.2/SCN2A, Nav1.3/SCN3A, Nav1.5/SCN5A, Nav1.6/SCN8A and Nav1.7/SCN9A voltage-gated sodium channels, with the highest affinity for Nav1.3/SCN3A, followed by Nav1.6/SCN8A and Nav1.7/SCN9A which are affected almost equally. Interestingly, shows a significant shift of the voltage dependence of activation for Nav1.3/SCN3A that is characteristic of beta-toxins. In addition, in presence of LPS, this toxin inhibits the release of NO, IL-6 and TNF-alpha in J774.1 cells. Further, in the absence of LPS, it stimulates the production of the anti-inflammatory cytokine IL-10. This toxin is active on mammals. This is Alpha-mammal toxin Ts2 from Tityus serrulatus (Brazilian scorpion).